A 461-amino-acid polypeptide reads, in one-letter code: Glycine--tRNA ligase (461 aa).

Residues Arg-100 and Glu-163 each contribute to the substrate site. Residues 195 to 197 (RNE), 205 to 210 (FRTREF), 282 to 283 (EL), and 326 to 329 (GLGR) contribute to the ATP site. 210 to 214 (FEQME) is a substrate binding site. 322–326 (EPAAG) contacts substrate.

It belongs to the class-II aminoacyl-tRNA synthetase family. As to quaternary structure, homodimer.

The protein localises to the cytoplasm. The enzyme catalyses tRNA(Gly) + glycine + ATP = glycyl-tRNA(Gly) + AMP + diphosphate. Functionally, catalyzes the attachment of glycine to tRNA(Gly). The chain is Glycine--tRNA ligase from Corynebacterium efficiens (strain DSM 44549 / YS-314 / AJ 12310 / JCM 11189 / NBRC 100395).